Here is a 1014-residue protein sequence, read N- to C-terminus: Klotho (1014 aa).

Positions 1–35 (MPASAPPRRPRPPPPSLSLSLLLVLLGLAGRRLRA) are cleaved as a signal peptide. The Extracellular portion of the chain corresponds to 36 to 983 (EPGDGAQTWA…ECSFFHTRKP (948 aa)). 2 glycosyl hydrolase-1 regions span residues 59–508 (FQGT…KNGF) and 517–955 (LEGT…SNGF). N-linked (GlcNAc...) asparagine glycans are attached at residues Asn-161, Asn-285, Asn-346, Asn-609, Asn-614, and Asn-696. A helical transmembrane segment spans residues 984 to 1004 (LVAFIAFLFFAFIVSLSLIFY). Over 1005-1014 (YSKKGRRRYQ) the chain is Cytoplasmic.

It belongs to the glycosyl hydrolase 1 family. Klotho subfamily. As to quaternary structure, homodimer. Interacts with FGF23 and FGFR1.

It is found in the cell membrane. The protein localises to the apical cell membrane. Its subcellular location is the secreted. The catalysed reaction is a beta-D-glucuronoside + H2O = D-glucuronate + an alcohol. In terms of biological role, may have weak glycosidase activity towards glucuronylated steroids. However, it lacks essential active site Glu residues at positions 241 and 874, suggesting it may be inactive as a glycosidase in vivo. May be involved in the regulation of calcium and phosphorus homeostasis by inhibiting the synthesis of active vitamin D. Essential factor for the specific interaction between FGF23 and FGFR1. The Klotho peptide generated by cleavage of the membrane-bound isoform may be an anti-aging circulating hormone which would extend life span by inhibiting insulin/IGF1 signaling. This chain is Klotho (KL), found in Macaca fascicularis (Crab-eating macaque).